The chain runs to 425 residues: Serine--tRNA ligase (425 aa).

233-235 (TAE) is a binding site for L-serine. ATP is bound at residue 264–266 (RRE). Position 287 (Glu287) interacts with L-serine. 351–354 (EISS) provides a ligand contact to ATP. Ser385 lines the L-serine pocket.

It belongs to the class-II aminoacyl-tRNA synthetase family. Type-1 seryl-tRNA synthetase subfamily. As to quaternary structure, homodimer. The tRNA molecule binds across the dimer.

The protein localises to the cytoplasm. The catalysed reaction is tRNA(Ser) + L-serine + ATP = L-seryl-tRNA(Ser) + AMP + diphosphate + H(+). The enzyme catalyses tRNA(Sec) + L-serine + ATP = L-seryl-tRNA(Sec) + AMP + diphosphate + H(+). The protein operates within aminoacyl-tRNA biosynthesis; selenocysteinyl-tRNA(Sec) biosynthesis; L-seryl-tRNA(Sec) from L-serine and tRNA(Sec): step 1/1. Catalyzes the attachment of serine to tRNA(Ser). Is also able to aminoacylate tRNA(Sec) with serine, to form the misacylated tRNA L-seryl-tRNA(Sec), which will be further converted into selenocysteinyl-tRNA(Sec). The chain is Serine--tRNA ligase from Prochlorococcus marinus (strain MIT 9215).